Consider the following 103-residue polypeptide: c-Myc-binding protein (103 aa).

It belongs to the AMY1 family. As to quaternary structure, binds via its C-terminal region to the N-terminal region of MYC. Associates with AKAP1/S-AKAP84. Interacts with MYCBPAP. Interacts with CFAP91. Highly expressed in heart, placenta, pancreas, skeletal muscle and kidney. Also present at low levels in lung.

It localises to the cytoplasm. The protein resides in the nucleus. It is found in the mitochondrion. In terms of biological role, may control the transcriptional activity of MYC. Stimulates the activation of E box-dependent transcription by MYC. This chain is c-Myc-binding protein, found in Homo sapiens (Human).